An 89-amino-acid polypeptide reads, in one-letter code: Small ribosomal subunit protein uS14 (89 aa).

The protein belongs to the universal ribosomal protein uS14 family. As to quaternary structure, part of the 30S ribosomal subunit. Contacts proteins S3 and S10.

Functionally, binds 16S rRNA, required for the assembly of 30S particles and may also be responsible for determining the conformation of the 16S rRNA at the A site. This chain is Small ribosomal subunit protein uS14, found in Cytophaga hutchinsonii (strain ATCC 33406 / DSM 1761 / CIP 103989 / NBRC 15051 / NCIMB 9469 / D465).